Consider the following 495-residue polypeptide: Protein FAM83F (495 aa).

Residue Ala2 is modified to N-acetylalanine. The DUF1669 stretch occupies residues 2 to 294 (AESQLSCLDE…LYAISEEVNL (293 aa)). Ser4 is modified (phosphoserine). Disordered regions lie at residues 341–362 (QQRE…GESA) and 384–495 (PISP…CVIS). Low complexity predominate over residues 447-458 (PAVPSSMASSPS). The residue at position 477 (Ser477) is a Phosphoserine.

It belongs to the FAM83 family. Directly interacts (via DUF1669) with CSNK1A1 and CSNK1A1L.

Its subcellular location is the cell membrane. The polypeptide is Protein FAM83F (Fam83f) (Mus musculus (Mouse)).